Reading from the N-terminus, the 753-residue chain is MTVINHTLGFPRVGLRRELKKAQESYWAGQSTREDLLAVGRELRARHWDQQKQAGIDLLPVGDFAWYDHVLTTSLLLGNVPARHQNKDGSVDIDTLFRLGRGRAPTGEPAAAAEMTKWFNTNYHYMVPEFVKGQQFKLTWTQLLDEVDEALALGHNIKPVLLGPVTYLWLGKVKGEQFDRLSLLNDILPVYQQVLAELAKRGVEWVQIDEPALVLELPQEWLDAFKPAYDALTGQTKLLLTTYFEGVTPNLDTITALPVQGLHVDLVHGKDEVAELNKRLPSDWLLSAGLVNGRNVWRADLTEKYAQIKDIVGKRDVWVASSCSLLHSPIDLSVETRLDAEVKSWFAFALQKCEELALLRDALNSGDTAKLVEWSAPIQARRHSTRVHNAAVEKRLAAITAKDSQRENAYEVRAEAQRARFNLPAWPTTTIGSFPQTTEIRGLRLDFKKGNLDANNYRTGIAEHIKQAIIEQERLGLDVLVHGEAERNDMVEYFGEHLDGFVFTQNGWVQSYGSRCVKPPVVIGDVSRPEAITVEWAKYAQSLTDKPVKGMLTGPVTILCWSFPREDVTRETIAKQIALALRDEVADLEAAGIGIIQIDEPALREGLPLRRSDWDAYLQWGVEAFRINAAVAKNDTQIHTHMCYCEFNDIMDSIAALDADVITIETSRSDMELLESFEEFDYPNEIGPGVYDIHSPNVPSVEWIEALLAKAAQRIPAERLWVNPDCGLKTRGWPETRAALANMVKAAQNLRQG.

5-methyltetrahydropteroyltri-L-glutamate is bound by residues 17–20 (RELK) and K117. L-homocysteine-binding positions include 431 to 433 (IGS) and E484. L-methionine-binding positions include 431-433 (IGS) and E484. 5-methyltetrahydropteroyltri-L-glutamate is bound by residues 515 to 516 (RC) and W561. D599 is an L-homocysteine binding site. D599 is an L-methionine binding site. Position 605 (E605) interacts with 5-methyltetrahydropteroyltri-L-glutamate. The Zn(2+) site is built by H641, C643, and E665. H694 serves as the catalytic Proton donor. Residue C726 participates in Zn(2+) binding.

Belongs to the vitamin-B12 independent methionine synthase family. Zn(2+) serves as cofactor.

The catalysed reaction is 5-methyltetrahydropteroyltri-L-glutamate + L-homocysteine = tetrahydropteroyltri-L-glutamate + L-methionine. Its pathway is amino-acid biosynthesis; L-methionine biosynthesis via de novo pathway; L-methionine from L-homocysteine (MetE route): step 1/1. In terms of biological role, catalyzes the transfer of a methyl group from 5-methyltetrahydrofolate to homocysteine resulting in methionine formation. This chain is 5-methyltetrahydropteroyltriglutamate--homocysteine methyltransferase, found in Enterobacter sp. (strain 638).